Here is a 128-residue protein sequence, read N- to C-terminus: L-ectoine synthase (128 aa).

It belongs to the ectoine synthase family.

The enzyme catalyses (2S)-4-acetamido-2-aminobutanoate = L-ectoine + H2O. Its pathway is amine and polyamine biosynthesis; ectoine biosynthesis; L-ectoine from L-aspartate 4-semialdehyde: step 3/3. Catalyzes the circularization of gamma-N-acetyl-alpha,gamma-diaminobutyric acid (ADABA) to ectoine (1,4,5,6-tetrahydro-2-methyl-4-pyrimidine carboxylic acid), which is an excellent osmoprotectant. This Virgibacillus pantothenticus protein is L-ectoine synthase.